A 550-amino-acid chain; its full sequence is O-phosphoserine--tRNA(Cys) ligase (550 aa).

The disordered stretch occupies residues 1 to 32 (MRFNPQDWKEKSHTNFEGAWHDGPSVITPPGE). Residues 212–214 (HMT), 257–259 (SAS), 299–300 (YY), and Asn-342 each bind substrate.

This sequence belongs to the class-II aminoacyl-tRNA synthetase family. O-phosphoseryl-tRNA(Cys) synthetase subfamily. As to quaternary structure, homotetramer. Interacts with SepCysS.

It carries out the reaction tRNA(Cys) + O-phospho-L-serine + ATP = O-phospho-L-seryl-tRNA(Cys) + AMP + diphosphate. Its function is as follows. Catalyzes the attachment of O-phosphoserine (Sep) to tRNA(Cys). The chain is O-phosphoserine--tRNA(Cys) ligase from Methanoregula boonei (strain DSM 21154 / JCM 14090 / 6A8).